Consider the following 140-residue polypeptide: Large ribosomal subunit protein uL11 (140 aa).

Belongs to the universal ribosomal protein uL11 family. Part of the ribosomal stalk of the 50S ribosomal subunit. Interacts with L10 and the large rRNA to form the base of the stalk. L10 forms an elongated spine to which L12 dimers bind in a sequential fashion forming a multimeric L10(L12)X complex. Post-translationally, one or more lysine residues are methylated.

Forms part of the ribosomal stalk which helps the ribosome interact with GTP-bound translation factors. This chain is Large ribosomal subunit protein uL11, found in Caldanaerobacter subterraneus subsp. tengcongensis (strain DSM 15242 / JCM 11007 / NBRC 100824 / MB4) (Thermoanaerobacter tengcongensis).